A 531-amino-acid chain; its full sequence is RCC1 and BTB domain-containing protein 1 (531 aa).

RCC1 repeat units lie at residues 40 to 91, 93 to 145, 147 to 198, 199 to 250, 252 to 302, and 304 to 356; these read NDEV…LLTT, DGVV…ALAA, GELF…AVLD, SGEV…ALTD, GLLY…AAKT, and GGHV…FLTV. 2 BTB domains span residues 370-437 and 470-499; these read ADLK…DLPP and ENAF…INHL.

In terms of tissue distribution, in the retina, mainly expressed in the inner retina with strong signals reaching up to the outer plexiform layer (at protein level).

Its subcellular location is the nucleus. Functionally, may be involved in cell cycle regulation by chromatin remodeling. This chain is RCC1 and BTB domain-containing protein 1 (Rcbtb1), found in Mus musculus (Mouse).